The following is a 425-amino-acid chain: MGPRRLLLVAACLCLCGPLLSARTRARRPASKATNATLDPRSFLLRNPNDKYEPFWEDEEKNESGLTEYRLVSINKSSPLQKPLPAFISEDASGYLTSSWLTLFVPSVYTGVFVVSLPVNIMAIVVFILKMKVKKPAVVYMLHLATADVLFVSVLPFKISYYLSGSDWQFGSELCRFVTAAFYCNMYASILLMTVISIDRFLAVVYPMQSLSWRTLGRASFTCLAIWALAIAGVVPLLLKEQTIQVPGLNITTCHDVLNETLLEGYYAYYFSAFSAVFFFVPLIISTVCYVSIIRCLSSSTVANRSKKSRALFLSAAVFCIFIICFGPTNILLIAHYSFLSHTSTTEAAYFAYLLCVCVSSISCCIDPLIYYYASSECQRYVYSILCCKESSDPSSSNSSGQLMASKMDTCSSNLNNSIYKKLLT.

A signal peptide spans 1 to 21; sequence MGPRRLLLVAACLCLCGPLLS. Residues 22–41 constitute a propeptide, removed for receptor activation; that stretch reads ARTRARRPASKATNATLDPR. 3 N-linked (GlcNAc...) asparagine glycosylation sites follow: Asn-35, Asn-62, and Asn-75. At 42-102 the chain is on the extracellular side; that stretch reads SFLLRNPNDK…SGYLTSSWLT (61 aa). The helical transmembrane segment at 103–128 threads the bilayer; it reads LFVPSVYTGVFVVSLPVNIMAIVVFI. At 129–137 the chain is on the cytoplasmic side; the sequence is LKMKVKKPA. Residues 138–157 traverse the membrane as a helical segment; sequence VVYMLHLATADVLFVSVLPF. Over 158 to 176 the chain is Extracellular; sequence KISYYLSGSDWQFGSELCR. A disulfide bridge connects residues Cys-175 and Cys-254. Residues 177–198 form a helical membrane-spanning segment; that stretch reads FVTAAFYCNMYASILLMTVISI. Over 199–218 the chain is Cytoplasmic; that stretch reads DRFLAVVYPMQSLSWRTLGR. A helical transmembrane segment spans residues 219–239; the sequence is ASFTCLAIWALAIAGVVPLLL. Residues 240-268 are Extracellular-facing; that stretch reads KEQTIQVPGLNITTCHDVLNETLLEGYYA. N-linked (GlcNAc...) asparagine glycosylation is found at Asn-250 and Asn-259. Residues 269-288 form a helical membrane-spanning segment; that stretch reads YYFSAFSAVFFFVPLIISTV. The Cytoplasmic portion of the chain corresponds to 289-311; the sequence is CYVSIIRCLSSSTVANRSKKSRA. A helical transmembrane segment spans residues 312–334; the sequence is LFLSAAVFCIFIICFGPTNILLI. The Extracellular segment spans residues 335-350; the sequence is AHYSFLSHTSTTEAAY. The chain crosses the membrane as a helical span at residues 351 to 374; it reads FAYLLCVCVSSISCCIDPLIYYYA. At 375-425 the chain is on the cytoplasmic side; sequence SSECQRYVYSILCCKESSDPSSSNSSGQLMASKMDTCSSNLNNSIYKKLLT. Residue Ser-418 is modified to Phosphoserine.

It belongs to the G-protein coupled receptor 1 family. Proteolytic cleavage by thrombin generates a new N-terminus that functions as a tethered ligand. Also proteolytically cleaved by cathepsin CTSG. Cleavage at 41-Arg-|-Ser-42 by CTSG results in receptor activation while cleavage at 55-Phe-|-Trp-56 results in inhibition of receptor activation. In terms of processing, phosphorylated in the C-terminal tail; probably mediating desensitization prior to the uncoupling and internalization of the receptor.

The protein localises to the cell membrane. Functionally, high affinity receptor that binds the activated thrombin, leading to calcium release from intracellular stores. The thrombin-activated receptor signaling pathway is mediated through PTX-insensitive G proteins, activation of phospholipase C resulting in the production of 1D-myo-inositol 1,4,5-trisphosphate (InsP3) which binds to InsP3 receptors causing calcium release from the stores. In astrocytes, the calcium released into the cytosol allows the Ca(2+)-dependent release of L-glutamate into the synaptic cleft through BEST1, that targets the neuronal postsynaptic GRIN2A/NMDAR receptor resulting in the synaptic plasticity regulation. May play a role in platelets activation and in vascular development. Mediates up-regulation of pro-inflammatory cytokines, such as MCP-1/CCL2 and IL6, triggered by coagulation factor Xa (F10) in cardiac fibroblasts and umbilical vein endothelial cells. This chain is Proteinase-activated receptor 1, found in Papio hamadryas (Hamadryas baboon).